A 190-amino-acid chain; its full sequence is Imidazoleglycerol-phosphate dehydratase (190 aa).

It belongs to the imidazoleglycerol-phosphate dehydratase family.

The protein localises to the cytoplasm. It carries out the reaction D-erythro-1-(imidazol-4-yl)glycerol 3-phosphate = 3-(imidazol-4-yl)-2-oxopropyl phosphate + H2O. Its pathway is amino-acid biosynthesis; L-histidine biosynthesis; L-histidine from 5-phospho-alpha-D-ribose 1-diphosphate: step 6/9. The polypeptide is Imidazoleglycerol-phosphate dehydratase (Methanococcus maripaludis (strain DSM 14266 / JCM 13030 / NBRC 101832 / S2 / LL)).